The chain runs to 284 residues: Acetyl-coenzyme A carboxylase carboxyl transferase subunit beta (284 aa).

The 260-residue stretch at 25-284 folds into the CoA carboxyltransferase N-terminal domain; the sequence is MWVKCPGCSA…ILGILYRPAA (260 aa). Zn(2+) contacts are provided by Cys-29, Cys-32, Cys-48, and Cys-51. A C4-type zinc finger spans residues 29–51; that stretch reads CPGCSATLLAKDLDANLNVCPTC.

This sequence belongs to the AccD/PCCB family. In terms of assembly, acetyl-CoA carboxylase is a heterohexamer composed of biotin carboxyl carrier protein (AccB), biotin carboxylase (AccC) and two subunits each of ACCase subunit alpha (AccA) and ACCase subunit beta (AccD). Requires Zn(2+) as cofactor.

It localises to the cytoplasm. The enzyme catalyses N(6)-carboxybiotinyl-L-lysyl-[protein] + acetyl-CoA = N(6)-biotinyl-L-lysyl-[protein] + malonyl-CoA. Its pathway is lipid metabolism; malonyl-CoA biosynthesis; malonyl-CoA from acetyl-CoA: step 1/1. In terms of biological role, component of the acetyl coenzyme A carboxylase (ACC) complex. Biotin carboxylase (BC) catalyzes the carboxylation of biotin on its carrier protein (BCCP) and then the CO(2) group is transferred by the transcarboxylase to acetyl-CoA to form malonyl-CoA. The protein is Acetyl-coenzyme A carboxylase carboxyl transferase subunit beta of Pelobacter propionicus (strain DSM 2379 / NBRC 103807 / OttBd1).